A 267-amino-acid chain; its full sequence is Undecaprenyl-diphosphatase 2 (267 aa).

Transmembrane regions (helical) follow at residues isoleucine 4 to isoleucine 24, glutamate 43 to phenylalanine 63, phenylalanine 84 to histidine 104, valine 109 to tryptophan 129, isoleucine 147 to threonine 167, alanine 186 to aspartate 206, isoleucine 219 to alanine 239, and phenylalanine 243 to isoleucine 263.

It belongs to the UppP family.

It is found in the cell inner membrane. It catalyses the reaction di-trans,octa-cis-undecaprenyl diphosphate + H2O = di-trans,octa-cis-undecaprenyl phosphate + phosphate + H(+). Functionally, catalyzes the dephosphorylation of undecaprenyl diphosphate (UPP). Confers resistance to bacitracin. The chain is Undecaprenyl-diphosphatase 2 from Shewanella oneidensis (strain ATCC 700550 / JCM 31522 / CIP 106686 / LMG 19005 / NCIMB 14063 / MR-1).